Consider the following 319-residue polypeptide: ATP-dependent 6-phosphofructokinase (319 aa).

G11 contributes to the ATP binding site. Position 21–25 (21–25 (RAVVR)) interacts with ADP. ATP-binding positions include 72 to 73 (RC) and 102 to 105 (GEGS). Residue E103 participates in Mg(2+) binding. 126-128 (TID) lines the substrate pocket. D128 serves as the catalytic Proton acceptor. K155 is a binding site for ADP. Substrate is bound by residues R163 and 170–172 (MGR). ADP contacts are provided by residues 186–188 (GAE), R212, and 214–216 (KIN). Residues E223, R244, and 250–253 (HVQR) contribute to the substrate site.

It belongs to the phosphofructokinase type A (PFKA) family. ATP-dependent PFK group I subfamily. Prokaryotic clade 'B1' sub-subfamily. As to quaternary structure, homotetramer. Mg(2+) serves as cofactor.

Its subcellular location is the cytoplasm. It catalyses the reaction beta-D-fructose 6-phosphate + ATP = beta-D-fructose 1,6-bisphosphate + ADP + H(+). The protein operates within carbohydrate degradation; glycolysis; D-glyceraldehyde 3-phosphate and glycerone phosphate from D-glucose: step 3/4. Allosterically activated by ADP and other diphosphonucleosides, and allosterically inhibited by phosphoenolpyruvate. Catalyzes the phosphorylation of D-fructose 6-phosphate to fructose 1,6-bisphosphate by ATP, the first committing step of glycolysis. This chain is ATP-dependent 6-phosphofructokinase, found in Thermotoga petrophila (strain ATCC BAA-488 / DSM 13995 / JCM 10881 / RKU-1).